The chain runs to 302 residues: MEYLLQVKIAALVGLLFLTLIFGFIPARVKWFRDTDGTETHRTVLSLISCFAGGVFLSACFLDIIPDYLSDINTELHARQLETSFPLPEFIMAAGFFTVLILERIVLNCKEMRATHEERTTLIPERKSGHGHGHGDGPDPESSGHHVHVDFQAHSPFRSFMLFLSLSLHSIFEGLAIGLQTTDPKVVEICIAILVHKSIIVFSLAVKLVQSAIPPLWVAAYIGVFALMSPVGIAIGISVMEAQLAAGPLIQAILEGFAAGTFVYITFLEILPHELNSPGKQLLKVLFLLLGFSIMAALSFLG.

The Extracellular portion of the chain corresponds to 1–6 (MEYLLQ). Residues 7–27 (VKIAALVGLLFLTLIFGFIPA) traverse the membrane as a helical segment. The Cytoplasmic segment spans residues 28–44 (RVKWFRDTDGTETHRTV). The chain crosses the membrane as a helical span at residues 45–65 (LSLISCFAGGVFLSACFLDII). Topologically, residues 66–80 (PDYLSDINTELHARQ) are extracellular. A helical transmembrane segment spans residues 81-101 (LETSFPLPEFIMAAGFFTVLI). Topologically, residues 102–158 (LERIVLNCKEMRATHEERTTLIPERKSGHGHGHGDGPDPESSGHHVHVDFQAHSPFR) are cytoplasmic. The segment at 123 to 145 (IPERKSGHGHGHGDGPDPESSGH) is disordered. A helical transmembrane segment spans residues 159 to 179 (SFMLFLSLSLHSIFEGLAIGL). The Extracellular segment spans residues 180-185 (QTTDPK). The chain crosses the membrane as a helical span at residues 186–206 (VVEICIAILVHKSIIVFSLAV). Residues 207 to 216 (KLVQSAIPPL) are Cytoplasmic-facing. A helical membrane pass occupies residues 217–237 (WVAAYIGVFALMSPVGIAIGI). Topologically, residues 238–251 (SVMEAQLAAGPLIQ) are extracellular. Residues 252-272 (AILEGFAAGTFVYITFLEILP) form a helical membrane-spanning segment. At 273–281 (HELNSPGKQ) the chain is on the cytoplasmic side. A helical membrane pass occupies residues 282–302 (LLKVLFLLLGFSIMAALSFLG).

It belongs to the ZIP transporter (TC 2.A.5) family. Highest levels in ovary, lower levels in intestine and gill, barely detected in kidney.

Its subcellular location is the cell membrane. It is found in the endoplasmic reticulum membrane. It catalyses the reaction Zn(2+)(in) = Zn(2+)(out). Transporter for the divalent cation Zn(2+). Mediates the influx of Zn(2+) into cells from extracellular space. The chain is Zinc transporter ZIP1 (slc39a1) from Takifugu rubripes (Japanese pufferfish).